The primary structure comprises 670 residues: DNA ligase (670 aa).

Residues 34 to 38, 83 to 84, and E113 contribute to the NAD(+) site; these read DFEFD and SL. K115 acts as the N6-AMP-lysine intermediate in catalysis. R136, E173, K288, and K312 together coordinate NAD(+). Residues C406, C409, C424, and C430 each contribute to the Zn(2+) site. Residues 591-670 enclose the BRCT domain; the sequence is PESDKFAGKS…EAEFISLLNS (80 aa).

This sequence belongs to the NAD-dependent DNA ligase family. LigA subfamily. The cofactor is Mg(2+). Mn(2+) serves as cofactor.

It catalyses the reaction NAD(+) + (deoxyribonucleotide)n-3'-hydroxyl + 5'-phospho-(deoxyribonucleotide)m = (deoxyribonucleotide)n+m + AMP + beta-nicotinamide D-nucleotide.. DNA ligase that catalyzes the formation of phosphodiester linkages between 5'-phosphoryl and 3'-hydroxyl groups in double-stranded DNA using NAD as a coenzyme and as the energy source for the reaction. It is essential for DNA replication and repair of damaged DNA. This is DNA ligase from Cytophaga hutchinsonii (strain ATCC 33406 / DSM 1761 / CIP 103989 / NBRC 15051 / NCIMB 9469 / D465).